Here is a 773-residue protein sequence, read N- to C-terminus: Cytochrome c oxidase subunit 1+2 (773 aa).

Residues Met-1–Thr-491 are COX1. The helical transmembrane segment at Thr-41–Ile-61 threads the bilayer. Ca(2+) is bound at residue Glu-64. His-85 provides a ligand contact to Fe(II)-heme a. 6 helical membrane passes run Leu-87–Leu-111, Leu-130–Ala-150, Val-173–Leu-193, Leu-211–Ala-231, Leu-262–Ile-278, and Ile-290–Val-310. His-264 is a binding site for Cu cation. A cross-link (1'-histidyl-3'-tyrosine (His-Tyr)) is located at residues His-264–Tyr-268. An O2-binding site is contributed by Tyr-268. The Cu cation site is built by His-314 and His-315. The next 2 helical transmembrane spans lie at Ile-335–Val-355 and Met-362–Leu-382. Mg(2+) contacts are provided by His-392 and Asp-393. 5 helical membrane-spanning segments follow: residues Tyr-396–Gly-416, Phe-444–Ala-464, Ile-483–Phe-503, Ile-555–Trp-575, and Gly-604–Ile-624. A heme a3-binding site is contributed by His-400. His-402 serves as a coordination point for Fe(II)-heme a. The segment at Ala-492–Lys-773 is COX2. Cu cation-binding residues include His-709, Cys-744, Cys-748, and His-752.

The protein in the N-terminal section; belongs to the heme-copper respiratory oxidase family. In the C-terminal section; belongs to the cytochrome c oxidase subunit 2 family. In terms of assembly, component of the cytochrome c oxidase (complex IV, CIV), a multisubunit enzyme composed of a catalytic core of 3 subunits and several supernumerary subunits. The complex exists as a monomer or a dimer and forms supercomplexes (SCs) in the inner mitochondrial membrane with ubiquinol-cytochrome c oxidoreductase (cytochrome b-c1 complex, complex III, CIII). Heme is required as a cofactor. The cofactor is Cu cation.

The protein resides in the mitochondrion inner membrane. It catalyses the reaction 4 Fe(II)-[cytochrome c] + O2 + 8 H(+)(in) = 4 Fe(III)-[cytochrome c] + 2 H2O + 4 H(+)(out). The protein operates within energy metabolism; oxidative phosphorylation. Its function is as follows. Component of the cytochrome c oxidase, the last enzyme in the mitochondrial electron transport chain which drives oxidative phosphorylation. The respiratory chain contains 3 multisubunit complexes succinate dehydrogenase (complex II, CII), ubiquinol-cytochrome c oxidoreductase (cytochrome b-c1 complex, complex III, CIII) and cytochrome c oxidase (complex IV, CIV), that cooperate to transfer electrons derived from NADH and succinate to molecular oxygen, creating an electrochemical gradient over the inner membrane that drives transmembrane transport and the ATP synthase. Cytochrome c oxidase is the component of the respiratory chain that catalyzes the reduction of oxygen to water. Electrons originating from reduced cytochrome c in the intermembrane space (IMS) are transferred via the dinuclear copper A center (CU(A)) of subunit 2 and heme A of subunit 1 to the active site in subunit 1, a binuclear center (BNC) formed by heme A3 and copper B (CU(B)). The BNC reduces molecular oxygen to 2 water molecules using 4 electrons from cytochrome c in the IMS and 4 protons from the mitochondrial matrix. This chain is Cytochrome c oxidase subunit 1+2 (cox1/2), found in Dictyostelium citrinum (Slime mold).